The chain runs to 519 residues: Glucoamylase GLA1 (519 aa).

Residues 1 to 27 (MRFGVLISVFVAIVSALPLQEGPLNKR) form the signal peptide. N-linked (GlcNAc...) asparagine glycosylation is found at N115 and N127. W166 contacts substrate. N205 is a glycosylation site (N-linked (GlcNAc...) asparagine). D234 serves as the catalytic Proton acceptor. The active-site Proton donor is E237.

It belongs to the glycosyl hydrolase 15 family.

The enzyme catalyses Hydrolysis of terminal (1-&gt;4)-linked alpha-D-glucose residues successively from non-reducing ends of the chains with release of beta-D-glucose.. The sequence is that of Glucoamylase GLA1 (GLA1) from Saccharomycopsis fibuligera (Yeast).